We begin with the raw amino-acid sequence, 239 residues long: dITP/XTP pyrophosphatase (239 aa).

Residue 7–12 (THNEGK) participates in substrate binding. Aspartate 74 acts as the Proton acceptor in catalysis. Aspartate 74 contacts Mg(2+). Substrate is bound by residues serine 75, 182–185 (FGYD), lysine 214, and 219–220 (HR).

It belongs to the HAM1 NTPase family. As to quaternary structure, homodimer. Requires Mg(2+) as cofactor.

The catalysed reaction is XTP + H2O = XMP + diphosphate + H(+). It carries out the reaction dITP + H2O = dIMP + diphosphate + H(+). The enzyme catalyses ITP + H2O = IMP + diphosphate + H(+). Its function is as follows. Pyrophosphatase that catalyzes the hydrolysis of nucleoside triphosphates to their monophosphate derivatives, with a high preference for the non-canonical purine nucleotides XTP (xanthosine triphosphate), dITP (deoxyinosine triphosphate) and ITP. Seems to function as a house-cleaning enzyme that removes non-canonical purine nucleotides from the nucleotide pool, thus preventing their incorporation into DNA/RNA and avoiding chromosomal lesions. The polypeptide is dITP/XTP pyrophosphatase (Bifidobacterium animalis subsp. lactis (strain AD011)).